The following is a 167-amino-acid chain: Iron-sulfur cluster assembly enzyme ISCU (167 aa).

The transit peptide at 1–34 (MAAAGAFRLRRAASALLLRSPRLPARELSAPARL) directs the protein to the mitochondrion. S14 carries the post-translational modification Phosphoserine; by MTOR. P46 provides a ligand contact to Zn(2+). C69 serves as the catalytic Cysteine persulfide intermediate. C69 is modified (cysteine persulfide). Residues G70, D71, C95, K112, and C138 each coordinate Zn(2+). C138 functions as the Cysteine persulfide intermediate in the catalytic mechanism. C138 carries the cysteine persulfide modification.

This sequence belongs to the NifU family. As to quaternary structure, homodimer; Tyr-35-mediated dimerization of two iron- and sulfide-containing ISCU subunit bind to the cysteine desulfurase complex. Component of the mitochondrial core iron-sulfur cluster (ISC) complex composed of NFS1, LYRM4, NDUFAB1, ISCU, FXN, and FDX2; this complex is an heterohexamer containing two copies of each monomer. Interacts (D-state) with NFS1 (homodimer form); each monomer interacts with the C-terminal regions of each NFS1 monomer. Interacts (monomer form) with FXN (via ferrous form); the interaction is possible when both are bound to the dimeric form of the cysteine desulfurase complex (NFS1:LYRM4) and enhances FXN interaction to the dimeric form of the cysteine desulfurase complex (NFS1:LYRM4). Interacts with GLRX5. Interacts (D-state) with HSPA9. Interacts (S-state) with HSCB; this interaction stimulates the ATPase activity of HSPA9. In terms of assembly, component of the cytoplasmic core iron-sulfur cluster (ISC) complex composed at least of NFS1, LYRM4, and ISCU; this complex interacts with FXN. Monomer; each monomer binds to the C-terminal regions of NFS1 (cytoplasmic and homodimer form). Interacts with NFS1 (cytoplasmic and homodimer form); this interaction promotes de novo iron-sulfur cluster formation. Interacts with HSCB (cytoplasmic form); this interaction stabilizes the (Fe-S) clusters on ISCU. In terms of processing, phosphorylation at Ser-14 is required for ISCU protein stabilization in the cytosol, whereas dephosphorylation of Ser-14, due to the inhibition of mTORC1 (mammalian target of rapamycin complex 1) complex, leads to degradation of the precursor form and ultimately to a decrease in the mitochondrial mature form. Cysteine persulfide is reduced by thiol-containing molecules such as glutathione and L-cysteine. As to expression, detected in heart, liver, skeletal muscle, brain, pancreas, kidney, lung and placenta.

Its subcellular location is the mitochondrion. It localises to the cytoplasm. The protein resides in the nucleus. In terms of biological role, mitochondrial scaffold protein, of the core iron-sulfur cluster (ISC) assembly complex, that provides the structural architecture on which the [2Fe-2S] clusters are assembled. The core iron-sulfur cluster (ISC) assembly complex is involved in the de novo synthesis of a [2Fe-2S] cluster, the first step of the mitochondrial iron-sulfur protein biogenesis. This process is initiated by the cysteine desulfurase complex (NFS1:LYRM4:NDUFAB1) that produces persulfide which is delivered on the scaffold protein ISCU in a FXN-dependent manner. Then this complex is stabilized by FDX2 which provides reducing equivalents to accomplish the [2Fe-2S] cluster assembly. Finally, the [2Fe-2S] cluster is transferred from ISCU to chaperone proteins, including HSCB, HSPA9 and GLRX5. Exists as two slow interchanging conformational states, a structured (S) and disordered (D) form. May modulate NFS1 desulfurase activity in a zinc-dependent manner. Modulates the interaction between FXN and the cysteine desulfurase complex. Cytoplasmic scaffold protein, of the cytoplasmic core iron-sulfur cluster (ISC) assembly complex that provides the structural architecture on which the Fe-S clusters are assembled and may be involved in the cytoplasmic iron-sulfur protein biogenesis. The chain is Iron-sulfur cluster assembly enzyme ISCU from Homo sapiens (Human).